The sequence spans 134 residues: Iron-sulfur cluster insertion protein ErpA (134 aa).

Iron-sulfur cluster-binding residues include C47, C126, and C128.

It belongs to the HesB/IscA family. In terms of assembly, homodimer. Iron-sulfur cluster serves as cofactor.

In terms of biological role, required for insertion of 4Fe-4S clusters for at least IspG. This Coxiella burnetii (strain RSA 331 / Henzerling II) protein is Iron-sulfur cluster insertion protein ErpA.